A 148-amino-acid chain; its full sequence is Snaclec alboaggregin-D subunit beta (148 aa).

The signal sequence occupies residues 1-23 (MGRFISVSFGLLVVFLSLSGAGA). A disulfide bridge connects residues Cys-27 and Cys-38. Residues 34-145 (YDLYCYKVFK…CNSTYSFVCK (112 aa)) enclose the C-type lectin domain. Residue Asn-47 is glycosylated (N-linked (GlcNAc...) asparagine). Cystine bridges form between Cys-55/Cys-144 and Cys-121/Cys-136. An N-linked (GlcNAc...) asparagine glycan is attached at Asn-137.

In terms of assembly, tetramer of heterodimers of alpha and beta subunits (alphabeta)(4); disulfide-linked. Expressed by the venom gland.

The protein localises to the secreted. Snaclec that induces human platelet aggregation in the absence of any cofactor with the EC(50) of 0.25 nM and causes tyrosine phosphorylation in human platelets. Antibodies against either platelet GPIbalpha (GP1BA) or GPVI (GP6) inhibit alboaggregin D-induced platelet aggregation. Only the combination of these two antibodies completely inhibit aggregation, suggesting that it acts through both GPIbalpha (GP1BA) and GPVI (GP6). This chain is Snaclec alboaggregin-D subunit beta, found in Trimeresurus albolabris (White-lipped pit viper).